Consider the following 122-residue polypeptide: Large ribosomal subunit protein bL12 (122 aa).

The protein belongs to the bacterial ribosomal protein bL12 family. In terms of assembly, homodimer. Part of the ribosomal stalk of the 50S ribosomal subunit. Forms a multimeric L10(L12)X complex, where L10 forms an elongated spine to which 2 to 4 L12 dimers bind in a sequential fashion. Binds GTP-bound translation factors.

In terms of biological role, forms part of the ribosomal stalk which helps the ribosome interact with GTP-bound translation factors. Is thus essential for accurate translation. The chain is Large ribosomal subunit protein bL12 from Mycoplasma pneumoniae (strain ATCC 29342 / M129 / Subtype 1) (Mycoplasmoides pneumoniae).